The chain runs to 98 residues: Feather keratin 1 (98 aa).

This sequence belongs to the avian keratin family. As to quaternary structure, the avian keratins (F-ker, S-ker, C-ker and B-ker) are a complex mixture of very similar polypeptides.

The sequence is that of Feather keratin 1 from Gallus gallus (Chicken).